The sequence spans 174 residues: NADH-ubiquinone oxidoreductase chain 6 (174 aa).

6 consecutive transmembrane segments (helical) span residues 1-21, 24-44, 47-67, 86-106, 111-131, and 151-171; these read MTYV…GFSS, SPIY…TIIL, GGGY…MVVF, VEVL…VLWV, GVVV…EGEG, and WLVV…IEIA.

The protein belongs to the complex I subunit 6 family. Core subunit of respiratory chain NADH dehydrogenase (Complex I) which is composed of 45 different subunits.

Its subcellular location is the mitochondrion inner membrane. The enzyme catalyses a ubiquinone + NADH + 5 H(+)(in) = a ubiquinol + NAD(+) + 4 H(+)(out). Its function is as follows. Core subunit of the mitochondrial membrane respiratory chain NADH dehydrogenase (Complex I) which catalyzes electron transfer from NADH through the respiratory chain, using ubiquinone as an electron acceptor. Essential for the catalytic activity and assembly of complex I. The polypeptide is NADH-ubiquinone oxidoreductase chain 6 (MT-ND6) (Pan paniscus (Pygmy chimpanzee)).